The following is a 194-amino-acid chain: tRNA (guanine-N(1)-)-methyltransferase (194 aa).

S-adenosyl-L-methionine is bound by residues G78 and I97–L102.

The protein belongs to the RNA methyltransferase TrmD family. In terms of assembly, homodimer.

It is found in the cytoplasm. The enzyme catalyses guanosine(37) in tRNA + S-adenosyl-L-methionine = N(1)-methylguanosine(37) in tRNA + S-adenosyl-L-homocysteine + H(+). Specifically methylates guanosine-37 in various tRNAs. The chain is tRNA (guanine-N(1)-)-methyltransferase from Mycoplasma mobile (strain ATCC 43663 / 163K / NCTC 11711) (Mesomycoplasma mobile).